Consider the following 420-residue polypeptide: Peroxisomal biogenesis factor 3 (420 aa).

The Peroxisomal portion of the chain corresponds to 1–16 (MPIFSSLNSFLRRHKK). Residues 17–37 (KLIVTATLTFSAYFLVNQFII) form a helical membrane-spanning segment. Residues 38 to 420 (KKLKNFQNSL…FSASIYSNFE (383 aa)) are Cytoplasmic-facing.

Belongs to the peroxin-3 family.

The protein localises to the peroxisome membrane. Involved in peroxisome biosynthesis. The protein is Peroxisomal biogenesis factor 3 (PEX3) of Debaryomyces hansenii (strain ATCC 36239 / CBS 767 / BCRC 21394 / JCM 1990 / NBRC 0083 / IGC 2968) (Yeast).